The chain runs to 228 residues: Ribose-5-phosphate isomerase A (228 aa).

Substrate contacts are provided by residues 29 to 32, 84 to 87, and 97 to 100; these read TGST, DGAD, and KGGG. E106 (proton acceptor) is an active-site residue. K124 is a substrate binding site.

The protein belongs to the ribose 5-phosphate isomerase family. In terms of assembly, homodimer.

It catalyses the reaction aldehydo-D-ribose 5-phosphate = D-ribulose 5-phosphate. It participates in carbohydrate degradation; pentose phosphate pathway; D-ribose 5-phosphate from D-ribulose 5-phosphate (non-oxidative stage): step 1/1. Catalyzes the reversible conversion of ribose-5-phosphate to ribulose 5-phosphate. This chain is Ribose-5-phosphate isomerase A, found in Sphingopyxis alaskensis (strain DSM 13593 / LMG 18877 / RB2256) (Sphingomonas alaskensis).